The sequence spans 551 residues: Glucans biosynthesis protein D (551 aa).

Residues 1–32 constitute a signal peptide (tat-type signal); the sequence is MDRRRFIKGSMAMAAVCGTSGIASLFSQAAFA.

This sequence belongs to the OpgD/OpgG family. Predicted to be exported by the Tat system. The position of the signal peptide cleavage has not been experimentally proven.

The protein resides in the periplasm. Its pathway is glycan metabolism; osmoregulated periplasmic glucan (OPG) biosynthesis. In terms of biological role, probably involved in the control of the structural glucose backbone of osmoregulated periplasmic glucans (OPGs). This is Glucans biosynthesis protein D from Escherichia coli O127:H6 (strain E2348/69 / EPEC).